A 309-amino-acid polypeptide reads, in one-letter code: Olfactory receptor 8A1 (309 aa).

At 1–28 the chain is on the extracellular side; it reads MTAENQSTVTEFILGGLTNRPELQLPLF. Residues 29-49 traverse the membrane as a helical segment; it reads LLFLGIYVVTMVGNLGMITLI. Over 50-56 the chain is Cytoplasmic; it reads GLNSQLH. Residues 57-77 form a helical membrane-spanning segment; it reads TPMYFFLSNLSLVDLCYSSVI. Over 78–90 the chain is Extracellular; the sequence is TPKMLINFVSQRN. The helical transmembrane segment at 91–111 threads the bilayer; the sequence is LISYVGCMSQLYFFLVFVIAE. C97 and C188 are oxidised to a cystine. Residues 112-133 are Cytoplasmic-facing; sequence CYMLTVMAYDRYVAICQPLLYN. Residues 134-154 traverse the membrane as a helical segment; it reads IIMSPALCSLLVAFVYAVGLI. Residues 155-195 are Extracellular-facing; the sequence is GSAIETGLMLKLNYCEDLISHYFCDILPLMKLSCSSTYDVE. The helical transmembrane segment at 196-216 threads the bilayer; it reads MAVFFLAGFDIIVTSLTVLIS. Over 217-238 the chain is Cytoplasmic; sequence YAFILSSILRISSNEGRSKAFS. A helical transmembrane segment spans residues 239 to 259; sequence TCSSHFAAVGLFYGSTAFMYL. The Extracellular segment spans residues 260-270; it reads KPSTASSLAQE. A helical transmembrane segment spans residues 271–291; sequence NVASVFYTTVIPMFNPLIYSL. At 292–309 the chain is on the cytoplasmic side; the sequence is RNKEVKTALDKTLRRKVF.

It belongs to the G-protein coupled receptor 1 family.

The protein localises to the cell membrane. Its function is as follows. Odorant receptor. The polypeptide is Olfactory receptor 8A1 (Mus musculus (Mouse)).